Consider the following 263-residue polypeptide: H-2 class II histocompatibility antigen, A-U beta chain (263 aa).

The first 27 residues, 1 to 27 (MALQIPSLLLLAAVVVLMVLSSPGTEG), serve as a signal peptide directing secretion. The beta-1 stretch occupies residues 28–120 (GDSERHFVVQ…TEVPTSLRRL (93 aa)). Residues 28-224 (GDSERHFVVQ…RAQSESARSK (197 aa)) lie on the Extracellular side of the membrane. 2 disulfide bridges follow: cysteine 42-cysteine 104 and cysteine 143-cysteine 199. Residue asparagine 46 is glycosylated (N-linked (GlcNAc...) asparagine). Positions 121 to 214 (EQPNVVISLS…SLKSPITVEW (94 aa)) are beta-2. The region spanning 123 to 211 (PNVVISLSRT…EHPSLKSPIT (89 aa)) is the Ig-like C1-type domain. A connecting peptide region spans residues 215–224 (RAQSESARSK). Residues 225–245 (MLSGIGGCVLGVIFLGLGLFI) traverse the membrane as a helical segment. Residues 246–263 (RHRSQKGPRGPPPAGLLQ) lie on the Cytoplasmic side of the membrane.

This sequence belongs to the MHC class II family.

It localises to the membrane. This chain is H-2 class II histocompatibility antigen, A-U beta chain, found in Mus musculus (Mouse).